Consider the following 772-residue polypeptide: MQHTGNCETLIVNSCFGSTCARSIPVFIDSCDLTAEVSRDEETRLARSVPVVLEKIESIIEKIFQTSGPNIVHDKDRAKIALCRLLLGPVAVPCFCEEWDTNDYLSKSGCKCLGPILYIHTSRCRCSDIPVFKFSIMKDYYASHVFRGLLSLKEWNTHLPNVLCTCELSMSDRYVATVFPKQNSIYLEYYPYFLCYLCRYLTVIEIEQCTNDLISLLGPKVAQRVIIHFKLLFGFRHKPHMGTVDSWFWENFFMLELHKLWLTVVKHNRVTTDFFNVVYEKIQNYKQYAIKTLRMSSKAVPAIQRFCLAKFKQQLLYLNIKVTVKKNKRELCLNGFVYGKTLYVVESSQLIFRNLLLLYYDYSLPDECKTKEENVLTTHYIRVISRLSFKQSRSAVPPGVKPDFTFVAQLPKRKELPNVPGGIDFAEITSVRHGAVILNAFNTNKVMNLKATISKRANFVYHRIPKTMTHSFVMYKHTFKEPAFTVSTFVSNDDLDMSSLNINIRGPYCDFLYALGVYKMHVSIQDLFLPAFVCNSNNSVDLQGLEDQDVVRNRKKKVYWITNFPCMISNANKVNVGWFKAGTGIIPRVSGKDLQNVLLQELNNVREIPGLVFDMDLHQLLVLLEQRNLHQIPFLVKQFLIFLRLGLLMGYGNSRRNKVHDIMLHLISNGLFDFNKNSVANTKIKHGCALVGTRLANNVPKIIARQKKMKLDHMGRNANSLAVLRFIVKSGEHKNKTVFIKLLEYLAETSTAINTRNEVARLLLTLTTNMKT.

Belongs to the herpesviridae UL87 family.

This chain is Protein U58 (U58), found in Human herpesvirus 6B (strain Z29) (HHV-6 variant B).